A 425-amino-acid chain; its full sequence is MSSIREEMVTSAVEFLKNPQIADSPLAKKIEFIESKGLNEAEVKEALLRSQGGNGSSSVASQVSSYSPSASQSSVAPSPPPFPDHYRNAPPLPERDWKDYFVMATATAGVSFGLYKVISNYVLPKLLPPSKEAIELDKEAIDREFTRVEALLNTFEEDQKAFYEEQREKSGKIEDTLTEIDAIISKTNEKNLNNEESLKYLKLEIESIKNTLMKNIDSQKSTISSELGSIEAQLDELKKLIVAKPEDEPIRAAPQPSLTTGANSLTSESSGRSSIPHSQSVPIRTQLTTPPSDSDTSGPAKLHIPPATSIPSLKDILRKEKNRTVDTFSKSNLGKDLESVAQSDPDKVEKYEGRRDLKSLERPEEDEKKEDDVEDGGDKDKLASSLESVKLPPSSEQVQAPAPKERTSSSSSRSGIPAWQLAAQS.

Disordered stretches follow at residues 49 to 89 (RSQG…YRNA) and 247 to 425 (DEPI…AAQS). Residues 56 to 76 (SSSVASQVSSYSPSASQSSVA) show a composition bias toward low complexity. The SH3-binding signature appears at 89–97 (APPLPERDW). Residues 256–297 (PSLTTGANSLTSESSGRSSIPHSQSVPIRTQLTTPPSDSDTS) show a composition bias toward polar residues. Composition is skewed to basic and acidic residues over residues 315-324 (DILRKEKNRT) and 333-366 (LGKDLESVAQSDPDKVEKYEGRRDLKSLERPEED).

It belongs to the peroxin-14 family. In terms of assembly, interacts with PEX13 (via SH3 domain); forming the PEX13-PEX14 docking complex. Interacts with PEX5 (via WxxxF/Y motifs). Interacts with PEX20 (via WxxxF/Y motifs). Interacts with PEX3, PEX7, PEX8 and PEX17. Phosphorylated on serine or threonine residues.

The protein localises to the peroxisome membrane. Component of the PEX13-PEX14 docking complex, a translocon channel that specifically mediates the import of peroxisomal cargo proteins bound to PEX5 or PEX20 receptors. The PEX13-PEX14 docking complex forms a large import pore which can be opened to a diameter of about 9 nm. Mechanistically, PEX5 (or PEX20) receptor along with cargo proteins associates with the PEX14 subunit of the PEX13-PEX14 docking complex in the cytosol, leading to the insertion of the receptor into the organelle membrane with the concomitant translocation of the cargo into the peroxisome matrix. The sequence is that of Peroxisomal membrane protein PEX14 from Komagataella pastoris (Yeast).